The sequence spans 420 residues: Serine hydroxymethyltransferase (420 aa).

(6S)-5,6,7,8-tetrahydrofolate-binding positions include leucine 121 and 125-127 (GHL). Lysine 230 is subject to N6-(pyridoxal phosphate)lysine. Residues glutamate 246 and 354-356 (SPF) each bind (6S)-5,6,7,8-tetrahydrofolate.

The protein belongs to the SHMT family. As to quaternary structure, homodimer. Requires pyridoxal 5'-phosphate as cofactor.

Its subcellular location is the cytoplasm. The catalysed reaction is (6R)-5,10-methylene-5,6,7,8-tetrahydrofolate + glycine + H2O = (6S)-5,6,7,8-tetrahydrofolate + L-serine. The protein operates within one-carbon metabolism; tetrahydrofolate interconversion. Its pathway is amino-acid biosynthesis; glycine biosynthesis; glycine from L-serine: step 1/1. In terms of biological role, catalyzes the reversible interconversion of serine and glycine with tetrahydrofolate (THF) serving as the one-carbon carrier. This reaction serves as the major source of one-carbon groups required for the biosynthesis of purines, thymidylate, methionine, and other important biomolecules. Also exhibits THF-independent aldolase activity toward beta-hydroxyamino acids, producing glycine and aldehydes, via a retro-aldol mechanism. In Rickettsia rickettsii (strain Iowa), this protein is Serine hydroxymethyltransferase.